We begin with the raw amino-acid sequence, 293 residues long: NAD kinase (293 aa).

The active-site Proton acceptor is aspartate 74. Residues 74 to 75 (DG), arginine 79, 148 to 149 (NE), arginine 176, aspartate 178, 189 to 194 (TAYALS), and glutamine 248 contribute to the NAD(+) site.

It belongs to the NAD kinase family. Requires a divalent metal cation as cofactor.

The protein resides in the cytoplasm. The enzyme catalyses NAD(+) + ATP = ADP + NADP(+) + H(+). In terms of biological role, involved in the regulation of the intracellular balance of NAD and NADP, and is a key enzyme in the biosynthesis of NADP. Catalyzes specifically the phosphorylation on 2'-hydroxyl of the adenosine moiety of NAD to yield NADP. This is NAD kinase from Blochmanniella floridana.